Consider the following 465-residue polypeptide: Pancreatic triacylglycerol lipase (465 aa).

An N-terminal signal peptide occupies residues 1 to 16 (MLLVWSLALLLGAVAG). 2 disulfide bridges follow: Cys20–Cys26 and Cys107–Cys118. The Nucleophile role is filled by Ser169. Asp193 functions as the Charge relay system in the catalytic mechanism. Ca(2+) contacts are provided by Glu204, Arg207, Asp209, and Asp212. Residues Cys254 and Cys278 are joined by a disulfide bond. His280 serves as the catalytic Charge relay system. 3 cysteine pairs are disulfide-bonded: Cys302–Cys313, Cys316–Cys321, and Cys449–Cys465. One can recognise a PLAT domain in the interval 355-465 (WRYKVSVTLS…EDVLLTLNAC (111 aa)).

Belongs to the AB hydrolase superfamily. Lipase family. Forms a 1:1 stoichiometric complex with (pro)colipase/CLPS. In terms of tissue distribution, expressed in many tissues with highest expression in liver. During hibernation there is a significant increases in expression in heart, white adipose tissue (WAT), and testis; but not in pancreas.

It localises to the secreted. The catalysed reaction is a triacylglycerol + H2O = a diacylglycerol + a fatty acid + H(+). It carries out the reaction 1,2,3-tributanoylglycerol + H2O = dibutanoylglycerol + butanoate + H(+). The enzyme catalyses 1,2,3-tri-(9Z-octadecenoyl)-glycerol + H2O = di-(9Z)-octadecenoylglycerol + (9Z)-octadecenoate + H(+). It catalyses the reaction all-trans-retinyl hexadecanoate + H2O = all-trans-retinol + hexadecanoate + H(+). The catalysed reaction is 1,2-di-(9Z-octadecenoyl)-glycerol + H2O = (9Z-octadecenoyl)-glycerol + (9Z)-octadecenoate + H(+). With respect to regulation, inhibited by bile salts, is reactivated by (pro)colipase/CLPS. Plays an important role in fat metabolism. It preferentially splits the esters of long-chain fatty acids at positions 1 and 3, producing mainly 2-monoacylglycerol and free fatty acids, and shows considerably higher activity against insoluble emulsified substrates than against soluble ones. Plays a role in hibernation as a key enzyme that shows high activity at low temperatures. When expressed in the hibernating heart it liberates fatty acids from triglycerides at temperatures as low as 0 degrees Celsius. The chain is Pancreatic triacylglycerol lipase (PNLIP) from Ictidomys tridecemlineatus (Thirteen-lined ground squirrel).